Consider the following 148-residue polypeptide: Meiosis inducing protein mei3 (148 aa).

The segment covering 1 to 20 (MSSQNTSNSRHPASSASALP) has biased composition (polar residues). The segment at 1 to 96 (MSSQNTSNSR…AQRIEHENKE (96 aa)) is disordered. The span at 21–46 (NRTNTARRSTSPRTSTGSSSTNTNTK) shows a compositional bias: low complexity. Over residues 75–86 (PMKRTKRVRRTP) the composition is skewed to basic residues.

Functionally, acts as a critical meiotic inducer by binding non-covalently to protein kinase ran1/pat1 inhibiting its enzymatic activity. Inhibits ran1/pat1 by acting as a pseudosubstrate for ran1/pat1 instead of its natural substrate ste11. Inactivation of the ran1/pat1 protein kinase is both necessary and sufficient to divert a vegetative cell from mitotic division to meiotic differentiation. This chain is Meiosis inducing protein mei3, found in Schizosaccharomyces pombe (strain 972 / ATCC 24843) (Fission yeast).